The following is a 381-amino-acid chain: Guanine nucleotide-binding protein subunit alpha-12 (381 aa).

A lipid anchor (S-palmitoyl cysteine) is attached at Cys11. Positions 56–381 (RLVKILLLGA…QENLKDIMLQ (326 aa)) constitute a G-alpha domain. The tract at residues 59–72 (KILLLGAGESGKST) is G1 motif. Residues 67-72 (ESGKST) and 202-205 (LLAR) contribute to the GTP site. Ser71 contacts Mg(2+). Positions 200-208 (DILLARKAT) are G2 motif. Thr208 contacts Mg(2+). Thr208 is subject to Phosphothreonine. A G3 motif region spans residues 223–232 (FKMVDVGGQR). Residues 292–299 (ILFLNKMD) are G4 motif. GTP is bound by residues 296–299 (NKMD) and Ala353. Residues 351-356 (TTAIDT) are G5 motif.

It belongs to the G-alpha family. G(12) subfamily. In terms of assembly, g proteins are composed of 3 units; alpha, beta and gamma. The alpha chain contains the guanine nucleotide binding site. Interacts with UBXD5. Interacts (in GTP-bound form) with PPP5C (via TPR repeats); activates PPP5C phosphatase activity and translocates PPP5C to the cell membrane. Interacts with RGS22. Interacts (via N-terminus) with NAPA; the interaction promotes CDH5 localization to plasma membrane. Interacts with CTNND1 (via N-terminus); the interaction regulates CDH1-mediated cell-cell adhesion. Interacts with PPP2R1A; the interaction promotes protein phosphatase 2A activation causing dephosphorylation of MAPT. Interacts (in GTP-bound form) with ARHGEF1. Interacts (in GTP-bound form) with ARHGEF11 (via RGS domain). Interacts (in GTP-bound form) with ARHGEF12 (via RGS domain).

The protein resides in the cell membrane. It is found in the lateral cell membrane. It localises to the cytoplasm. Its function is as follows. Guanine nucleotide-binding proteins (G proteins) are involved as modulators or transducers in various transmembrane signaling systems. Activates effector molecule RhoA by binding and activating RhoGEFs (ARHGEF12/LARG). GNA12-dependent Rho signaling subsequently regulates transcription factor AP-1 (activating protein-1). GNA12-dependent Rho signaling also regulates protein phosphatese 2A activation causing dephosphorylation of its target proteins. Promotes tumor cell invasion and metastasis by activating RhoA/ROCK signaling pathway and up-regulating pro-inflammatory cytokine production. Inhibits CDH1-mediated cell adhesion in process independent from Rho activation. Together with NAPA promotes CDH5 localization to plasma membrane. May play a role in the control of cell migration through the TOR signaling cascade. The protein is Guanine nucleotide-binding protein subunit alpha-12 (GNA12) of Homo sapiens (Human).